Reading from the N-terminus, the 259-residue chain is Short-chain dehydrogenase chry4 (259 aa).

NADP(+)-binding residues include Arg-37, Asp-55, Asn-81, Tyr-154, Lys-158, Val-185, and Thr-187. Tyr-154 functions as the Proton donor in the catalytic mechanism. Lys-158 (lowers pKa of active site Tyr) is an active-site residue.

The protein belongs to the short-chain dehydrogenases/reductases (SDR) family.

It participates in pigment biosynthesis. Short-chain dehydrogenase; part of the gene cluster that mediates the biosynthesis of the yellow pigment chrysogine. Pyruvic acid and anthranilic acid are likely substrates for the nonribosomal peptide synthetase chry1/NRPS14, with pyruvic acid adenylated by the first A domain and anthranilic acid by the second. If pyruvic acid and anthranilic acid are merged and released from chry1/NRPS14 by hydrolysis, a subsequent amidation would lead to 2-pyruvoylaminobenzamide. This process is probably catalyzed by the amidotransferase chry2 using glutamine as amino donor. The dehydrogenase chry5 that has a terminal berberine bridge domain for C-N cyclization could catalyze the cyclization of 2-pyruvoylaminobenzamide to yield acetyl-4(3H)-quinazolidinone. A final reduction of acetyl-4(3H)-quinazolidinone catalyzed by the oxidoreductase chry4 would result in chrysogine. This chain is Short-chain dehydrogenase chry4, found in Gibberella zeae (strain ATCC MYA-4620 / CBS 123657 / FGSC 9075 / NRRL 31084 / PH-1) (Wheat head blight fungus).